Reading from the N-terminus, the 196-residue chain is HTH-type transcriptional regulator EcpR (196 aa).

Positions 138-196 (KDIKKDKITDREMEIIRMTAQGMLPKSIARIENCSVKTVYTHRRNAEAKLYSKIYKLVP) constitute an HTH luxR-type domain. The segment at residues 162-181 (PKSIARIENCSVKTVYTHRR) is a DNA-binding region (H-T-H motif).

The protein belongs to the EcpR/MatA family.

The protein localises to the cytoplasm. In terms of biological role, part of the ecpRABCDE operon, which encodes the E.coli common pilus (ECP). ECP is found in both commensal and pathogenic strains and plays a dual role in early-stage biofilm development and host cell recognition. Positively regulates the expression of the ecp operon. The polypeptide is HTH-type transcriptional regulator EcpR (ecpR) (Escherichia coli O17:K52:H18 (strain UMN026 / ExPEC)).